Reading from the N-terminus, the 339-residue chain is Ketol-acid reductoisomerase (NADP(+)) (339 aa).

The region spanning 1-182 is the KARI N-terminal Rossmann domain; the sequence is MRVYYDRDAD…GGGRSGVIET (182 aa). Residues 24–27, arginine 48, serine 51, threonine 53, and 83–86 contribute to the NADP(+) site; these read YGSQ and DELQ. Histidine 108 is a catalytic residue. Glycine 134 contributes to the NADP(+) binding site. A KARI C-terminal knotted domain is found at 183–328; sequence TFKEECETDL…GKLRAMMPWI (146 aa). Residues aspartate 191, glutamate 195, glutamate 227, and glutamate 231 each coordinate Mg(2+). Serine 252 is a substrate binding site.

This sequence belongs to the ketol-acid reductoisomerase family. It depends on Mg(2+) as a cofactor.

The enzyme catalyses (2R)-2,3-dihydroxy-3-methylbutanoate + NADP(+) = (2S)-2-acetolactate + NADPH + H(+). It catalyses the reaction (2R,3R)-2,3-dihydroxy-3-methylpentanoate + NADP(+) = (S)-2-ethyl-2-hydroxy-3-oxobutanoate + NADPH + H(+). Its pathway is amino-acid biosynthesis; L-isoleucine biosynthesis; L-isoleucine from 2-oxobutanoate: step 2/4. The protein operates within amino-acid biosynthesis; L-valine biosynthesis; L-valine from pyruvate: step 2/4. Its function is as follows. Involved in the biosynthesis of branched-chain amino acids (BCAA). Catalyzes an alkyl-migration followed by a ketol-acid reduction of (S)-2-acetolactate (S2AL) to yield (R)-2,3-dihydroxy-isovalerate. In the isomerase reaction, S2AL is rearranged via a Mg-dependent methyl migration to produce 3-hydroxy-3-methyl-2-ketobutyrate (HMKB). In the reductase reaction, this 2-ketoacid undergoes a metal-dependent reduction by NADPH to yield (R)-2,3-dihydroxy-isovalerate. The chain is Ketol-acid reductoisomerase (NADP(+)) from Brucella abortus (strain S19).